A 637-amino-acid polypeptide reads, in one-letter code: Serine protease Hayan (637 aa).

An N-terminal signal peptide occupies residues Met-1–Gly-26. The Clip domain occupies Pro-31–Cys-79. 3 disulfide bridges follow: Cys-32/Cys-78, Cys-42/Cys-68, and Cys-48/Cys-79. 4 disordered regions span residues Phe-95–Asn-137, Lys-152–Met-178, Gln-216–Asn-260, and Leu-286–Arg-365. A compositionally biased stretch (basic and acidic residues) spans Glu-125–Glu-136. Polar residues predominate over residues Pro-234–Arg-244. Residues Pro-245–Asn-260 are compositionally biased toward low complexity. Basic and acidic residues predominate over residues Glu-306 to Gln-320. The segment covering Pro-321–Leu-332 has biased composition (polar residues). Intrachain disulfides connect Cys-371-Cys-497, Cys-414-Cys-430, Cys-543-Cys-567, and Cys-578-Cys-609. A Peptidase S1 domain is found at Ile-385–Trp-632. Catalysis depends on charge relay system residues His-429 and Asp-477. The active-site Charge relay system is the Ser-582.

This sequence belongs to the peptidase S1 family. CLIP subfamily.

The protein resides in the secreted. Its function is as follows. Serine protease which, by converting prophenoloxidase 1 (PPO1) into its active form, plays an essential role in the melanization immune response to physical or septic wounding. May function in diverse PPO1-activating cascades that are negatively controlled by different serpin proteins; Spn27A and Spn28D in the hemolymph, and Spn28D and Spn77BA in the trachea. Also required in the systematic wound response by mediating the redox-dependent activation of the JNK cytoprotective cascade in neuronal tissues after integument wounding. The protein is Serine protease Hayan of Drosophila melanogaster (Fruit fly).